The sequence spans 63 residues: Cecropin-A1 (63 aa).

The N-terminal stretch at 1–23 (MKFYNIFVFVALILAITIGQSEA) is a signal peptide. Arginine 62 is subject to Arginine amide.

It belongs to the cecropin family.

The protein localises to the secreted. Its function is as follows. Cecropins have lytic and antibacterial activity against several Gram-positive and Gram-negative bacteria. This Drosophila mauritiana (Fruit fly) protein is Cecropin-A1 (CecA1).